The sequence spans 276 residues: Ribosomal RNA small subunit methyltransferase A (276 aa).

Asn19, Leu21, Gly46, Glu71, Asp94, and Asn117 together coordinate S-adenosyl-L-methionine.

It belongs to the class I-like SAM-binding methyltransferase superfamily. rRNA adenine N(6)-methyltransferase family. RsmA subfamily.

It is found in the cytoplasm. It catalyses the reaction adenosine(1518)/adenosine(1519) in 16S rRNA + 4 S-adenosyl-L-methionine = N(6)-dimethyladenosine(1518)/N(6)-dimethyladenosine(1519) in 16S rRNA + 4 S-adenosyl-L-homocysteine + 4 H(+). In terms of biological role, specifically dimethylates two adjacent adenosines (A1518 and A1519) in the loop of a conserved hairpin near the 3'-end of 16S rRNA in the 30S particle. May play a critical role in biogenesis of 30S subunits. The sequence is that of Ribosomal RNA small subunit methyltransferase A from Burkholderia ambifaria (strain ATCC BAA-244 / DSM 16087 / CCUG 44356 / LMG 19182 / AMMD) (Burkholderia cepacia (strain AMMD)).